Reading from the N-terminus, the 141-residue chain is Large ribosomal subunit protein uL11 (141 aa).

This sequence belongs to the universal ribosomal protein uL11 family. As to quaternary structure, part of the ribosomal stalk of the 50S ribosomal subunit. Interacts with L10 and the large rRNA to form the base of the stalk. L10 forms an elongated spine to which L12 dimers bind in a sequential fashion forming a multimeric L10(L12)X complex. In terms of processing, one or more lysine residues are methylated.

In terms of biological role, forms part of the ribosomal stalk which helps the ribosome interact with GTP-bound translation factors. This chain is Large ribosomal subunit protein uL11, found in Carboxydothermus hydrogenoformans (strain ATCC BAA-161 / DSM 6008 / Z-2901).